A 334-amino-acid polypeptide reads, in one-letter code: MSLHLSNVILHQLSKNDQEELIVNYRAESLENDTASENLVAELHRVFNSKAGKGFGSFKSDSEFQQSLHEFRAGEQSFYDFSQKSALRLKDELSKYPFADEGTLVLAEYQSLATDYLFIGLLPSNQSLKVTEGLDISATDYLDISKMDIVARLDLSTYDTDKESNRYLTYIKGRVGRKVADFFLDFLQAEVGLDAKQQNQVLMQAVEDFVSDSKLEKEEAISYKKQVADYCNEQLKAGDEVQVRELSGELPASTDGTSFFDYTSEQGYELEDSFPADRATMRKLTKFVGAGGGLNVSFDSLLLGERIFYDPETDTLTIKGTPPNLRDQLTRNKS.

This sequence belongs to the YejK family.

Its subcellular location is the cytoplasm. The protein resides in the nucleoid. The polypeptide is Nucleoid-associated protein VS_0951 (Vibrio atlanticus (strain LGP32) (Vibrio splendidus (strain Mel32))).